The primary structure comprises 1167 residues: ATP-dependent helicase/deoxyribonuclease subunit B (1167 aa).

In terms of domain architecture, UvrD-like helicase ATP-binding spans 1–359 (MSLRFLLGRS…IRQTEAYRDL (359 aa)). An ATP-binding site is contributed by 8 to 15 (GRSGSGKT). Positions 282–588 (VNRRHQDKAL…EFALVPPAID (307 aa)) constitute a UvrD-like helicase C-terminal domain. [4Fe-4S] cluster-binding residues include cysteine 803, cysteine 1125, cysteine 1128, and cysteine 1134.

The protein belongs to the helicase family. AddB/RexB type 1 subfamily. Heterodimer of AddA and AddB. The cofactor is Mg(2+). Requires [4Fe-4S] cluster as cofactor.

Its function is as follows. The heterodimer acts as both an ATP-dependent DNA helicase and an ATP-dependent, dual-direction single-stranded exonuclease. Recognizes the chi site generating a DNA molecule suitable for the initiation of homologous recombination. The AddB subunit has 5' -&gt; 3' nuclease activity but not helicase activity. The sequence is that of ATP-dependent helicase/deoxyribonuclease subunit B from Geobacillus thermodenitrificans (strain NG80-2).